Reading from the N-terminus, the 1007-residue chain is Rho-type GTPase-activating protein 1 (1007 aa).

2 LIM zinc-binding domains span residues 13–66 (CVRC…CFDC) and 70–122 (CKNC…CLSC). Disordered stretches follow at residues 203 to 293 (ITGY…KSPS), 401 to 478 (EKYS…STSL), and 505 to 600 (KETA…NDPS). Residues 212–221 (NSGSSKFGSN) show a composition bias toward low complexity. Composition is skewed to polar residues over residues 250 to 261 (ANMSLNVATDPT) and 270 to 293 (HSRN…KSPS). Threonine 278 carries the phosphothreonine modification. Phosphoserine is present on serine 291. Positions 411–421 (KGRKISRSLSR) are enriched in basic residues. Positions 454 to 466 (RSQDLMRDNDSHT) are enriched in basic and acidic residues. Composition is skewed to polar residues over residues 467–478 (GLDTPNSNSTSL) and 529–579 (SPAT…LENS). Phosphothreonine is present on threonine 532. Basic and acidic residues predominate over residues 583–600 (EEQKETLYENSESRNDPS). One can recognise a Rho-GAP domain in the interval 791-1006 (SSLVARCNYE…FIFGNYKDIL (216 aa)).

In terms of biological role, GTPase-activating protein (GAP) for CDC42 and/or RHO1. Negative regulator of the pheromone-response pathway through the STE20 protein kinase; acts at a step between the G-protein and the MAP kinase module. Dominant suppressor of bud emergence defect caused by deletion of IPL2/BEM2. Involved in the control of polarized cell growth and proper bud site selection. This chain is Rho-type GTPase-activating protein 1 (RGA1), found in Saccharomyces cerevisiae (strain ATCC 204508 / S288c) (Baker's yeast).